Consider the following 414-residue polypeptide: TnpB-like protein MJ1635 (414 aa).

Residues C329, C332, C346, and C349 each contribute to the Zn(2+) site.

In the N-terminal section; belongs to the transposase 2 family. The protein in the C-terminal section; belongs to the transposase 35 family.

This Methanocaldococcus jannaschii (strain ATCC 43067 / DSM 2661 / JAL-1 / JCM 10045 / NBRC 100440) (Methanococcus jannaschii) protein is TnpB-like protein MJ1635.